The chain runs to 83 residues: Small integral membrane protein 10 (83 aa).

A helical transmembrane segment spans residues 64-82; sequence FFYFYILASVILNVHLQVY.

It localises to the membrane. The chain is Small integral membrane protein 10 (SMIM10) from Homo sapiens (Human).